The chain runs to 68 residues: Large ribosomal subunit protein uL29 (68 aa).

This sequence belongs to the universal ribosomal protein uL29 family.

This chain is Large ribosomal subunit protein uL29, found in Picosynechococcus sp. (strain ATCC 27264 / PCC 7002 / PR-6) (Agmenellum quadruplicatum).